A 329-amino-acid chain; its full sequence is Beta-ketoacyl-[acyl-carrier-protein] synthase III (329 aa).

Active-site residues include cysteine 113 and histidine 255. An ACP-binding region spans residues 256–260 (QANQR). The active site involves asparagine 285.

This sequence belongs to the thiolase-like superfamily. FabH family. As to quaternary structure, homodimer.

It localises to the cytoplasm. The enzyme catalyses malonyl-[ACP] + acetyl-CoA + H(+) = 3-oxobutanoyl-[ACP] + CO2 + CoA. It participates in lipid metabolism; fatty acid biosynthesis. Its function is as follows. Catalyzes the condensation reaction of fatty acid synthesis by the addition to an acyl acceptor of two carbons from malonyl-ACP. Catalyzes the first condensation reaction which initiates fatty acid synthesis and may therefore play a role in governing the total rate of fatty acid production. Possesses both acetoacetyl-ACP synthase and acetyl transacylase activities. Its substrate specificity determines the biosynthesis of branched-chain and/or straight-chain of fatty acids. In Chlorobium luteolum (strain DSM 273 / BCRC 81028 / 2530) (Pelodictyon luteolum), this protein is Beta-ketoacyl-[acyl-carrier-protein] synthase III.